The following is a 285-amino-acid chain: MKAKPLSNDPGSKRYAYRVNKEENRKELKHVKIDESSLVEGHQVDLPKKRFYRQRAHSNPFSDHQLEYPGSPEEMDWTKLYPHYVDPESGKMTKKVTIADIGCGFGGLLVDLSPEFPDDLILGMEIRVQVTNYVEDRIIALRTNHVKEQGYQNINVLRGNAMKFLPNFFQKGQLSKMFFCFPDPHFKQRKHKARIITNTLLSEYAYVLREGGIVYTITDVKDLHDWMVKHLTEHPLFERLPEEWEEEDSCVRIMRHATEEGKKVERKKGDKFVACFRRLPTPEII.

Residues G102, 125 to 126, 160 to 161, and C180 each bind S-adenosyl-L-methionine; these read EI and NA. D183 is a catalytic residue. An S-adenosyl-L-methionine-binding site is contributed by 258-260; the sequence is TEE.

It belongs to the class I-like SAM-binding methyltransferase superfamily. TrmB family. In terms of assembly, forms a complex with TRM82.

The protein localises to the nucleus. The enzyme catalyses guanosine(46) in tRNA + S-adenosyl-L-methionine = N(7)-methylguanosine(46) in tRNA + S-adenosyl-L-homocysteine. The protein operates within tRNA modification; N(7)-methylguanine-tRNA biosynthesis. In terms of biological role, catalyzes the formation of N(7)-methylguanine at position 46 (m7G46) in tRNA. The chain is tRNA (guanine-N(7)-)-methyltransferase from Candida glabrata (strain ATCC 2001 / BCRC 20586 / JCM 3761 / NBRC 0622 / NRRL Y-65 / CBS 138) (Yeast).